Consider the following 230-residue polypeptide: MTNEVQSIFNRIAPVYDQLNDWLSLGQHRIWKEMAVKWSAAKSGNTALDLCCGSGDLALRLARRVGATGYVYGVDFSCNLLETAKERSQKQYPQPAIAWVEADVLNLPFDDNQFDAATMGYGLRNVKDIPRSLQELHRVLKPGAKAAILDFHRPSNPQLRAFQQLYLNSFVVPVANYLGLKEEYAYISPSLDRFPIGKEQIELARQVGFAVATHYPIANGMMGVLVVSKF.

The protein belongs to the class I-like SAM-binding methyltransferase superfamily. MenG/UbiE family.

The enzyme catalyses demethylphylloquinol + S-adenosyl-L-methionine = phylloquinol + S-adenosyl-L-homocysteine + H(+). Its pathway is cofactor biosynthesis; phylloquinone biosynthesis. Methyltransferase required for the conversion of 2-phytyl-1,4-beta-naphthoquinol to phylloquinol. The chain is 2-phytyl-1,4-naphtoquinone methyltransferase from Nostoc punctiforme (strain ATCC 29133 / PCC 73102).